The sequence spans 365 residues: UDP-N-acetylglucosamine--N-acetylmuramyl-(pentapeptide) pyrophosphoryl-undecaprenol N-acetylglucosamine transferase (365 aa).

Residues 12–14 (TGG), N123, R166, S194, and Q295 contribute to the UDP-N-acetyl-alpha-D-glucosamine site.

The protein belongs to the glycosyltransferase 28 family. MurG subfamily.

Its subcellular location is the cell inner membrane. The enzyme catalyses di-trans,octa-cis-undecaprenyl diphospho-N-acetyl-alpha-D-muramoyl-L-alanyl-D-glutamyl-meso-2,6-diaminopimeloyl-D-alanyl-D-alanine + UDP-N-acetyl-alpha-D-glucosamine = di-trans,octa-cis-undecaprenyl diphospho-[N-acetyl-alpha-D-glucosaminyl-(1-&gt;4)]-N-acetyl-alpha-D-muramoyl-L-alanyl-D-glutamyl-meso-2,6-diaminopimeloyl-D-alanyl-D-alanine + UDP + H(+). Its pathway is cell wall biogenesis; peptidoglycan biosynthesis. Its function is as follows. Cell wall formation. Catalyzes the transfer of a GlcNAc subunit on undecaprenyl-pyrophosphoryl-MurNAc-pentapeptide (lipid intermediate I) to form undecaprenyl-pyrophosphoryl-MurNAc-(pentapeptide)GlcNAc (lipid intermediate II). This Phenylobacterium zucineum (strain HLK1) protein is UDP-N-acetylglucosamine--N-acetylmuramyl-(pentapeptide) pyrophosphoryl-undecaprenol N-acetylglucosamine transferase.